Consider the following 246-residue polypeptide: MyoD family inhibitor domain-containing protein (246 aa).

A disordered region spans residues 1–71 (MSGAGEALAP…WGNPSDGELI (71 aa)). The segment covering 33 to 43 (KCDKDNTEKDI) has biased composition (basic and acidic residues). Residues 44–63 (TQATNSHFTHGEMQDQSIWG) are compositionally biased toward polar residues. The MDFI domain occupies 74 to 246 (QPQRLPQLQT…MECCGICFPS (173 aa)). Phosphoserine is present on residues S128, S140, and S143.

It belongs to the MDFI family. Interacts with HAND1; the interaction sequesters HAND1 into the nucleolus and inhibits its activity. Interacts (via C-terminus) with ZIC2. Interacts (via C-terminus) with AXIN1, the histidine-rich region of CCNT1/cyclin-T and weakly with LEF1. Interacts with CCNT2. Interacts with GATA2. Interacts (via C-terminus) with Piezo channel composed of PIEZO1 or PIEZO2; the interaction prolongs Piezo channel inactivation. As to quaternary structure, (Microbial infection) Interacts (via C-terminus) with HIV-1 Tat and Rev. Palmitoylated. Expressed in lymphatic tissues. Detected in the spleen, thymus, peripheral blood leukocytes as well as prostate, uterus and small intestine. Expressed in lymphatic endothelial cells.

Its subcellular location is the nucleus. It is found in the nucleolus. It localises to the cytoplasm. The protein resides in the secreted. Functionally, required to control the activity of various transcription factors through their sequestration in the cytoplasm. Retains nuclear Zic proteins ZIC1, ZIC2 and ZIC3 in the cytoplasm and inhibits their transcriptional activation. Modulates the expression from cellular promoters. Binds to the axin complex, resulting in an increase in the level of free beta-catenin. Affects axin regulation of the WNT and JNK signaling pathways. Involved in the development of lymphatic vessel valves. Required to promote lymphatic endothelial cell migration, in a process that involves down-regulation of integrin beta 1 activation and control of cell adhesion to the extracellular matrix. Regulates the activity of mechanosensitive Piezo channel. (Microbial infection) Modulates the expression from viral promoters. Down-regulates Tat-dependent transcription of the human immunodeficiency virus type 1 (HIV-1) LTR by interacting with HIV-1 Tat and Rev and impairing their nuclear import, probably by rendering the NLS domains inaccessible to importin-beta. Also stimulates activation of human T-cell leukemia virus type I (HTLV-I) LTR. This Homo sapiens (Human) protein is MyoD family inhibitor domain-containing protein.